A 264-amino-acid polypeptide reads, in one-letter code: 3-methyl-2-oxobutanoate hydroxymethyltransferase (264 aa).

Residues D45 and D84 each contribute to the Mg(2+) site. 3-methyl-2-oxobutanoate contacts are provided by residues 45-46 (DS), D84, and K112. Mg(2+) is bound at residue E114. Catalysis depends on E181, which acts as the Proton acceptor.

It belongs to the PanB family. Homodecamer; pentamer of dimers. The cofactor is Mg(2+).

The protein resides in the cytoplasm. The enzyme catalyses 3-methyl-2-oxobutanoate + (6R)-5,10-methylene-5,6,7,8-tetrahydrofolate + H2O = 2-dehydropantoate + (6S)-5,6,7,8-tetrahydrofolate. It functions in the pathway cofactor biosynthesis; (R)-pantothenate biosynthesis; (R)-pantoate from 3-methyl-2-oxobutanoate: step 1/2. Catalyzes the reversible reaction in which hydroxymethyl group from 5,10-methylenetetrahydrofolate is transferred onto alpha-ketoisovalerate to form ketopantoate. The chain is 3-methyl-2-oxobutanoate hydroxymethyltransferase from Erwinia tasmaniensis (strain DSM 17950 / CFBP 7177 / CIP 109463 / NCPPB 4357 / Et1/99).